We begin with the raw amino-acid sequence, 710 residues long: PC3-like endoprotease variant B (710 aa).

Positions 1-29 (MNYRGIYRRRYVFVLLLLVAVVNISYGWT) are cleaved as a signal peptide. 3 N-linked (GlcNAc...) asparagine glycosylation sites follow: asparagine 23, asparagine 62, and asparagine 190. Residues 30-152 (VLKNKDYKRR…QQKILERVKR (123 aa)) constitute a propeptide that is removed on maturation. Residues 164 to 486 (MWYLLNTGQA…FGRLDANAMV (323 aa)) form the Peptidase S8 domain. Active-site charge relay system residues include aspartate 202 and histidine 242. 2 disulfides stabilise this stretch: cysteine 259-cysteine 411 and cysteine 351-cysteine 381. Serine 419 acts as the Charge relay system in catalysis. One can recognise a P/Homo B domain in the interval 495-638 (LPAQRKCTAA…EERVIDTQTK (144 aa)). A disulfide bridge connects residues cysteine 501 and cysteine 527. Residues 668–710 (TIEGSTQDHVKPKEGAKEPWGNYRNTNNINNNSSTAFKRKKKQ) form a disordered region. Over residues 673–684 (TQDHVKPKEGAK) the composition is skewed to basic and acidic residues. Over residues 689-699 (NYRNTNNINNN) the composition is skewed to low complexity. Residues asparagine 698 and asparagine 699 are each glycosylated (N-linked (GlcNAc...) asparagine).

The protein belongs to the peptidase S8 family. Furin subfamily. Predominantly in the body column.

Functionally, probably involved in the processing of hormone and other protein precursors at sites comprised of pairs of basic amino acid residues. This is PC3-like endoprotease variant B from Hydra vulgaris (Hydra).